Reading from the N-terminus, the 953-residue chain is Nonsense-mediated mRNA decay factor SMG8 (953 aa).

Disordered stretches follow at residues 571-604 (AQDA…CSQP) and 629-653 (PCFD…ESNN). Positions 574–586 (AELDPDEEDEELP) are enriched in acidic residues. Over residues 595 to 604 (ITQSNGCSQP) the composition is skewed to polar residues. Over residues 634-653 (SSSSEAESTCSGTSSEESNN) the composition is skewed to low complexity.

The protein belongs to the SMG8 family.

In terms of biological role, involved in nonsense-mediated decay (NMD) of mRNAs containing premature stop codons. Probable component of kinase complex containing nonC and recruited to stalled ribosomes. The protein is Nonsense-mediated mRNA decay factor SMG8 of Drosophila persimilis (Fruit fly).